The sequence spans 523 residues: MSRPYDSMEPKVMDDDMLKAAVGEQGPQEEAGQLAKQEGILFKDVLSLQLDFQNILRIDNLWQFENLKKLQLNNNIIERIEGLTNLIHLVWLDLSFNNIEAIEGLDTLVNLEDLSLSNNRISKVDSLDALVKLQVLSLGNNQISNMMNIIYLRRFPCLRTLSLAGNPVSEAEEYKMFIYAYLSDLVYLDFRRVDEQMREMAKMKHQYSIDELKHREAQLQMKLEEEQAKQEKLEEHKMAFVEHLNGPFLFDSMYSEDVEGNKLSYLPGVRELLEAYKDKFVIICLNIFEYGLNQQEKRKVELDTFNECIQEAILENQDQGKLKVAKFEEKHLLNLNAIREETDLSNIEKKLTECTESIGELFNTLMILEMQLVEQLEETINIFERNITDLVGLFIENVQSLIAQCRDLENHHHEKLLEIAINTLEKILKGEMDEDLPDDVRALFVDKDTIVNAVGASHDIHLLKIDNREDELVTGINSWCAHLVDKIHKDEIMRNRKRVKEINQFVDHMQSELDNLECGDIID.

5 LRR repeats span residues 44–65 (DVLS…WQFE), 66–87 (NLKK…TNLI), 88–109 (HLVW…DTLV), 110–131 (NLED…DALV), and 132–153 (KLQV…IYLR). The LRRCT domain occupies 166–204 (NPVSEAEEYKMFIYAYLSDLVYLDFRRVDEQMREMAKMK). Coiled coils occupy residues 204–242 (KHQY…AFVE) and 333–393 (LNLN…LVGL).

Belongs to the DRC3 family. Component of the nexin-dynein regulatory complex (N-DRC). Interacts with DRC1. Interacts with TCTE1/DRC5. Interacts with DRC7.

It localises to the cytoplasm. Its subcellular location is the cytoskeleton. The protein resides in the cilium axoneme. It is found in the cell projection. The protein localises to the cilium. It localises to the flagellum axoneme. Its subcellular location is the flagellum. Its function is as follows. Component of the nexin-dynein regulatory complex (N-DRC) a key regulator of ciliary/flagellar motility which maintains the alignment and integrity of the distal axoneme and regulates microtubule sliding in motile axonemes. This chain is Dynein regulatory complex subunit 3 (Drc3), found in Mus musculus (Mouse).